The following is a 118-amino-acid chain: Large ribosomal subunit protein uL24 (118 aa).

The protein belongs to the universal ribosomal protein uL24 family. As to quaternary structure, part of the 50S ribosomal subunit.

Functionally, one of two assembly initiator proteins, it binds directly to the 5'-end of the 23S rRNA, where it nucleates assembly of the 50S subunit. Its function is as follows. One of the proteins that surrounds the polypeptide exit tunnel on the outside of the subunit. This is Large ribosomal subunit protein uL24 from Synechococcus sp. (strain CC9902).